Consider the following 461-residue polypeptide: MNTSELETLIRNILSEQLAPAKAEVKGNGIFPSVSEAIDAAHQAFLRYQQCPLKTRSAIINALREELTPHLASLAAESAAETGMGNKEDKFLKNKAALDNTPGIEDLTTTALTGDGGMVLFEYSPFGVIGSVAPSTNPTETIINNSISMLAAGNSVYFSPHPGAKAVSLKLITMIEDIAFRCCGIRNLVVTVTEPTFEATQQMMAHPKIAVLAITGGPGIVAMGMKSGKKVIGAGAGNPPCIVDETADLVKAAEDIINGASFDFNLPCIAEKSLIVVDAVAERLVQQMQSFGAMRLNSEEIDKLRAVCLPEGIANKQLVGKSPATLLEAAGIPVPAKAPRLLIGIVKADDPWVTSEQLMPMLPIVTVSDFDSALTLALKVEEGLHHTAIMHSQNVSRLNLAARTLQTSIFVKNGPSYAGIGVGGEGFTTFTIATPTGEGTTSARTFARSRRCVLTNGFSIR.

A targets protein to the BMC region spans residues 1 to 18; that stretch reads MNTSELETLIRNILSEQL.

The protein belongs to the EutE/PduP family. Interacts with PduK, probably with its BMC-containing N-terminus. Interacts with shell proteins PduA and PduJ, interacts with PduQ.

It localises to the bacterial microcompartment. It carries out the reaction propanal + NAD(+) + CoA = propanoyl-CoA + NADH + H(+). The protein operates within polyol metabolism; 1,2-propanediol degradation. Its function is as follows. A CoA-acylating aldehyde dehydrogenase required for optimal 1,2-propanediol (1,2-PD) degradation. Optimizes growth in the bacterial microcompartment (BMC) dedicated to 1,2-PD degradation by minimizing propionaldehyde toxicity. NAD(+) and NADH are regenerated internally within the Pdu BMC by the PduP and PduQ enzymes, which reduce NAD(+) and oxidize NADH respectively, although there must also be cofactor transport across the BMC. Directly targeted to the BMC. Functionally, expression of a cosmid containing the full 21-gene pdu operon in E.coli allows E.coli to grow on 1,2-propanediol (1,2-PD) with the appearance of bacterial microcompartments (BMC) in its cytoplasm. The 1,2-PD-specific bacterial microcompartment (BMC) concentrates low levels of 1,2-PD catabolic enzymes, concentrates volatile reaction intermediates thus enhancing pathway flux and keeps the level of toxic, mutagenic propionaldehyde low. The polypeptide is Propanal dehydrogenase (CoA-propanoylating) (Citrobacter freundii).